The chain runs to 440 residues: C4-dicarboxylate transport protein (440 aa).

8 helical membrane-spanning segments follow: residues 8–28 (LYLQ…LFPA), 40–60 (FIKL…VTGI), 74–94 (LKGL…GLVV), 147–167 (GDIL…AALK), 187–207 (IVGF…AFTV), 221–241 (LIAC…GLVL), 288–308 (VVGL…SIYL), and 354–374 (AATL…LLGV). Residues 419 to 440 (EEVEPANEPEPPAIPAGAGLHG) form a disordered region.

It belongs to the dicarboxylate/amino acid:cation symporter (DAACS) (TC 2.A.23) family.

It localises to the cell inner membrane. In terms of biological role, responsible for the transport of dicarboxylates such as succinate, fumarate, and malate from the periplasm across the membrane. In Anaeromyxobacter sp. (strain K), this protein is C4-dicarboxylate transport protein.